A 245-amino-acid chain; its full sequence is Aliphatic sulfonates import ATP-binding protein SsuB 1 (245 aa).

Positions 8–223 (VSITGLRKSF…ERADPDILRY (216 aa)) constitute an ABC transporter domain. Position 40 to 47 (40 to 47 (GPSGTGKT)) interacts with ATP.

Belongs to the ABC transporter superfamily. Aliphatic sulfonates importer (TC 3.A.1.17.2) family. In terms of assembly, the complex is composed of two ATP-binding proteins (SsuB), two transmembrane proteins (SsuC) and a solute-binding protein (SsuA).

It localises to the cell membrane. The enzyme catalyses ATP + H2O + aliphatic sulfonate-[sulfonate-binding protein]Side 1 = ADP + phosphate + aliphatic sulfonateSide 2 + [sulfonate-binding protein]Side 1.. Its function is as follows. Part of the ABC transporter complex SsuABC involved in aliphatic sulfonates import. Responsible for energy coupling to the transport system. This is Aliphatic sulfonates import ATP-binding protein SsuB 1 from Nocardia farcinica (strain IFM 10152).